The following is a 269-amino-acid chain: LOB domain-containing protein 6 (269 aa).

The LOB domain occupies 37-138 (SPCAACKFLR…QDLARAKFEL (102 aa)).

The protein belongs to the LOB domain-containing protein family.

The protein resides in the nucleus. In terms of biological role, negative regulator of cell proliferation in the adaxial side of leaves. Regulates the formation of a symmetric lamina and the establishment of venation. The chain is LOB domain-containing protein 6 (LBD6) from Oryza sativa subsp. indica (Rice).